The primary structure comprises 269 residues: 5'-nucleotidase SurE (269 aa).

Residues Asp-11, Asp-12, Ser-43, and Asn-101 each contribute to the a divalent metal cation site.

Belongs to the SurE nucleotidase family. A divalent metal cation serves as cofactor.

The protein localises to the cytoplasm. The catalysed reaction is a ribonucleoside 5'-phosphate + H2O = a ribonucleoside + phosphate. In terms of biological role, nucleotidase that shows phosphatase activity on nucleoside 5'-monophosphates. This is 5'-nucleotidase SurE from Synechococcus sp. (strain CC9902).